We begin with the raw amino-acid sequence, 213 residues long: Glycerol-3-phosphate acyltransferase (213 aa).

A run of 6 helical transmembrane segments spans residues 3–23 (IIILLLIASYLLGAIPFGLWI), 48–68 (ILGVKAGIAVFIFDLLKGTLA), 71–91 (LPLIFHINGVSPLIFGLLAVI), 119–139 (PFFLLYLLVIFILVLWLFSMI), 144–164 (VVAAIFALLGILIFPSFGFIL), and 165–185 (TSYDLLFSIIIFALAIIIIFR).

This sequence belongs to the PlsY family. Probably interacts with PlsX.

The protein localises to the cell membrane. It catalyses the reaction an acyl phosphate + sn-glycerol 3-phosphate = a 1-acyl-sn-glycero-3-phosphate + phosphate. It participates in lipid metabolism; phospholipid metabolism. In terms of biological role, catalyzes the transfer of an acyl group from acyl-phosphate (acyl-PO(4)) to glycerol-3-phosphate (G3P) to form lysophosphatidic acid (LPA). This enzyme utilizes acyl-phosphate as fatty acyl donor, but not acyl-CoA or acyl-ACP. The protein is Glycerol-3-phosphate acyltransferase of Lactococcus lactis subsp. cremoris (strain SK11).